The primary structure comprises 289 residues: MEHTPRNAGFALPAAYMSTMTSSFIDFLKAEAPDLLPRARVENMPAVPGGGSAFEPPHGTTIVASTFNGGVLIAGDRRATTGNTIASRDLEKVYVTDAYSAVGIAGTAGIALELVRLYTVELAHYEKIEGVSLSLDGKANKLANMVKGNLDGALAGLAVLPLFVGYDIDADDPKRAGRIVSFDVTGGRYEENAGYHAIGSGAVYAKSSLKKLYDPEADADTAVRTAIEALYDAADDDTATGGPDLVRRIYPTVVTITAEHGAVMLPQEETASIAESVVRERSERPGQLG.

Residues 1–59 constitute a propeptide, removed in mature form; by autocatalysis; the sequence is MEHTPRNAGFALPAAYMSTMTSSFIDFLKAEAPDLLPRARVENMPAVPGGGSAFEPPHG. T60 serves as the catalytic Nucleophile.

This sequence belongs to the peptidase T1B family. In terms of assembly, the 20S proteasome core is composed of 14 alpha and 14 beta subunits that assemble into four stacked heptameric rings, resulting in a barrel-shaped structure. The two inner rings, each composed of seven catalytic beta subunits, are sandwiched by two outer rings, each composed of seven alpha subunits. The catalytic chamber with the active sites is on the inside of the barrel. Has a gated structure, the ends of the cylinder being occluded by the N-termini of the alpha-subunits. Is capped by the proteasome-associated ATPase, ARC.

Its subcellular location is the cytoplasm. It catalyses the reaction Cleavage of peptide bonds with very broad specificity.. The protein operates within protein degradation; proteasomal Pup-dependent pathway. With respect to regulation, the formation of the proteasomal ATPase ARC-20S proteasome complex, likely via the docking of the C-termini of ARC into the intersubunit pockets in the alpha-rings, may trigger opening of the gate for substrate entry. Interconversion between the open-gate and close-gate conformations leads to a dynamic regulation of the 20S proteasome proteolysis activity. Component of the proteasome core, a large protease complex with broad specificity involved in protein degradation. The chain is Proteasome subunit beta from Saccharomonospora viridis (strain ATCC 15386 / DSM 43017 / JCM 3036 / CCUG 5913 / NBRC 12207 / NCIMB 9602 / P101) (Thermoactinomyces viridis).